Consider the following 446-residue polypeptide: MSSSVWQERRHGEDKQRRNDHRSPFQRDRARILHSAAFRRLQAKTQVLGVGMNDFYRTRLTHSLEVSQIGTGIAAQLSRKYPEHKPLLGSMSLLESLCLAHDIGHPPFGHGGEVALNYMMRHHGGFEGNGQTFRILSKLEPYTEAFGMNLCRRTMLGILKYPAPQSLLFVAGSHPEITNHRQLKPSQWPPVKGIFDDDSDIFDWVLEPLSVADRARFTSVQPSLQPNYPHLRTQFKSFDCSIMELADDIAYAVHDLEDAIVMGIVTASQWQQDVAPTLKHSGDPWIRQELADIGTKLFSHEHHLRKDAIGTLVNGFVTAIIINDDPAFEEPLLRFNASLEPEFANALNVLKQLVFKYVIRKPEIQMLEYKGQQIVMGLFEAFASDPERLLPLNTQERWRTSEQQGQNSHRVLADYISGMTDEFAGRLYQQLFSPKAGSNVELSKEM.

The segment at 1 to 28 (MSSSVWQERRHGEDKQRRNDHRSPFQRD) is disordered. Residues 7-28 (QERRHGEDKQRRNDHRSPFQRD) are compositionally biased toward basic and acidic residues. One can recognise an HD domain in the interval 59 to 252 (RLTHSLEVSQ…MELADDIAYA (194 aa)).

Belongs to the dGTPase family. Type 2 subfamily.

This chain is Deoxyguanosinetriphosphate triphosphohydrolase-like protein, found in Shewanella sp. (strain MR-7).